A 291-amino-acid chain; its full sequence is Bis(5'-nucleosyl)-tetraphosphatase, symmetrical (291 aa).

It belongs to the Ap4A hydrolase family.

The catalysed reaction is P(1),P(4)-bis(5'-adenosyl) tetraphosphate + H2O = 2 ADP + 2 H(+). In terms of biological role, hydrolyzes diadenosine 5',5'''-P1,P4-tetraphosphate to yield ADP. This is Bis(5'-nucleosyl)-tetraphosphatase, symmetrical from Coxiella burnetii (strain RSA 331 / Henzerling II).